The chain runs to 246 residues: Cell division protein ZapD (246 aa).

It belongs to the ZapD family. As to quaternary structure, interacts with FtsZ.

Its subcellular location is the cytoplasm. Cell division factor that enhances FtsZ-ring assembly. Directly interacts with FtsZ and promotes bundling of FtsZ protofilaments, with a reduction in FtsZ GTPase activity. The polypeptide is Cell division protein ZapD (Vibrio parahaemolyticus serotype O3:K6 (strain RIMD 2210633)).